We begin with the raw amino-acid sequence, 348 residues long: Enkurin domain-containing protein 1 (348 aa).

Disordered stretches follow at residues 1–65, 84–195, and 262–282; these read MCEG…RPGG, GGIS…PSAK, and AEAR…TRMP. At serine 93 the chain carries Phosphoserine. Basic and acidic residues predominate over residues 95–127; it reads KRKDPKDHEKENMRRIREIQRRFREQEHSREQG. The residue at position 138 (serine 138) is a Phosphoserine. A compositionally biased stretch (basic and acidic residues) spans 139–148; sequence PKYDKVESRV. Positions 253 to 345 constitute an Enkurin domain; that stretch reads ERRDLWRREA…IFSRPKVFVK (93 aa).

In terms of assembly, interacts with alpha-tubulin. Interacts (via central region) with CCP110 (via N-terminal region); competes with CEP97 for binding to CCP110.

The protein localises to the cytoplasm. The protein resides in the cytoskeleton. It localises to the microtubule organizing center. It is found in the centrosome. Its subcellular location is the centriole. The protein localises to the cilium basal body. The protein resides in the cell projection. It localises to the cilium. It is found in the spindle. Its subcellular location is the spindle pole. The protein localises to the cilium axoneme. Functionally, microtubule-binding protein which regulates microtubule organization and stability. Promotes the stability of astral microtubules and facilitates the proper orientation of the mitotic spindle. This allows the oriented division of basal keratinocytes and contributes to epidermal stratification. Required for the assembly of both primary and motile cilia. Destabilizes the interaction between CCP110 and CEP97 by competing with CEP97 for binding to CCP110 which promotes the removal of CCP110 and CEP97 from the mother centriole and allows the initiation of ciliogenesis. The chain is Enkurin domain-containing protein 1 (ENKD1) from Bos taurus (Bovine).